We begin with the raw amino-acid sequence, 456 residues long: Hydroxyproline dehydrogenase (456 aa).

Residues Lys-310 and Lys-320 each carry the N6-acetyllysine modification.

It belongs to the proline oxidase family. The cofactor is FAD.

The catalysed reaction is trans-4-hydroxy-L-proline + a quinone = (3R,5S)-1-pyrroline-3-hydroxy-5-carboxylate + a quinol + H(+). The enzyme catalyses L-proline + a quinone = (S)-1-pyrroline-5-carboxylate + a quinol + H(+). In terms of biological role, dehydrogenase that converts trans-4-L-hydroxyproline to delta-1-pyrroline-3-hydroxy-5-carboxylate (Hyp) using ubiquinone-10 as the terminal electron acceptor. Can also use proline as a substrate but with a very much lower efficiency. Does not react with other diastereomers of Hyp: trans-4-D-hydroxyproline and cis-4-L-hydroxyproline. Ubiquininone analogs such as menadione, duroquinone and ubiquinone-1 react more efficiently than oxygen as the terminal electron acceptor during catalysis. The polypeptide is Hydroxyproline dehydrogenase (Mus musculus (Mouse)).